The chain runs to 751 residues: Catalase-peroxidase (751 aa).

The first 12 residues, Met1–Ala12, serve as a signal peptide directing secretion. Positions Trp91–Tyr241 form a cross-link, tryptophyl-tyrosyl-methioninium (Trp-Tyr) (with M-267). The Proton acceptor role is filled by His92. Residues Tyr241–Met267 constitute a cross-link (tryptophyl-tyrosyl-methioninium (Tyr-Met) (with W-91)). His282 provides a ligand contact to heme b.

The protein belongs to the peroxidase family. Peroxidase/catalase subfamily. As to quaternary structure, homodimer or homotetramer. The cofactor is heme b. Formation of the three residue Trp-Tyr-Met cross-link is important for the catalase, but not the peroxidase activity of the enzyme.

It carries out the reaction H2O2 + AH2 = A + 2 H2O. The catalysed reaction is 2 H2O2 = O2 + 2 H2O. In terms of biological role, bifunctional enzyme with both catalase and broad-spectrum peroxidase activity. This chain is Catalase-peroxidase, found in Cupriavidus necator (strain ATCC 17699 / DSM 428 / KCTC 22496 / NCIMB 10442 / H16 / Stanier 337) (Ralstonia eutropha).